The following is a 714-amino-acid chain: Fatty acid oxidation complex subunit alpha (714 aa).

The interval 1-190 (MEMASAFTLN…KLGLVDDVVP (190 aa)) is enoyl-CoA hydratase. The tract at residues 306–714 (APLNSVGILG…FWKTTATDLQ (409 aa)) is 3-hydroxyacyl-CoA dehydrogenase.

This sequence in the N-terminal section; belongs to the enoyl-CoA hydratase/isomerase family. The protein in the central section; belongs to the 3-hydroxyacyl-CoA dehydrogenase family. In terms of assembly, heterotetramer of two alpha chains (FadJ) and two beta chains (FadI).

The protein resides in the cytoplasm. The enzyme catalyses a (3S)-3-hydroxyacyl-CoA = a (2E)-enoyl-CoA + H2O. The catalysed reaction is a 4-saturated-(3S)-3-hydroxyacyl-CoA = a (3E)-enoyl-CoA + H2O. It catalyses the reaction a (3S)-3-hydroxyacyl-CoA + NAD(+) = a 3-oxoacyl-CoA + NADH + H(+). It carries out the reaction (3S)-3-hydroxybutanoyl-CoA = (3R)-3-hydroxybutanoyl-CoA. Its pathway is lipid metabolism; fatty acid beta-oxidation. Functionally, catalyzes the formation of a hydroxyacyl-CoA by addition of water on enoyl-CoA. Also exhibits 3-hydroxyacyl-CoA epimerase and 3-hydroxyacyl-CoA dehydrogenase activities. The sequence is that of Fatty acid oxidation complex subunit alpha from Escherichia coli O81 (strain ED1a).